Consider the following 184-residue polypeptide: Tumor necrosis factor alpha-induced protein 8-like protein 2 (184 aa).

S3 carries the phosphoserine modification.

The protein belongs to the TNFAIP8 family. TNFAIP8L2 subfamily. May interact with CASP8; however, such result is unclear since could not reproduce the interaction with CASP8. Interacts with RAC1. Post-translationally, phosphorylated by TAK1/MAP3K7; this phosphorylation triggers association with BTRC and subsequent ubiquitination and degradation. Ubiquitinated in a BTRC-depdent manner; leading to degradation mediated through the proteasome pathway.

The protein resides in the cytoplasm. Its subcellular location is the nucleus. The protein localises to the lysosome. Its function is as follows. Acts as a negative regulator of innate and adaptive immunity by maintaining immune homeostasis. Plays a regulatory role in the Toll-like signaling pathway by determining the strength of LPS-induced signaling and gene expression. Inhibits TCR-mediated T-cell activation and negatively regulate T-cell function to prevent hyperresponsiveness. Also inhibits autolysosome formation via negatively modulating MTOR activation by interacting with RAC1 and promoting the disassociation of the RAC1-MTOR complex. Plays an essential role in NK-cell biology by acting as a checkpoint and displaying an expression pattern correlating with NK-cell maturation process and by negatively regulating NK-cell maturation and antitumor immunity. Mechanistically, suppresses IL-15-triggered mTOR activity in NK-cells. This chain is Tumor necrosis factor alpha-induced protein 8-like protein 2 (Tnfaip8l2), found in Rattus norvegicus (Rat).